The chain runs to 287 residues: MRFTKMEALGNDFVVLDGIRQRLHLTPETIRTLADRRRGVGCDQLLIAEPPAHIAADVRYRIFNADGTEVEHCGNGVRCLARFLVDEGLAAPGVLRIETDGRITEAEPRDDGQVSVDMGPPELEPARIPFQAPVRQEAYRLATSRGEQTIGAVSMGNPHAVLRVDDMTGAPVAELGPEIERHPRFPRRVNVGFMEVCTRDRIRLRVFERGVGETPACGTGACAAVVAGRLRDWLDAPVTVELTGGVLVIHWLGPGRSVWMTGPARTVFRGEIELPASAAATPRGPTR.

Substrate-binding residues include Asn11, Gln44, and Asn64. Cys73 serves as the catalytic Proton donor. Substrate is bound by residues 74–75 (GN), Asn157, Asn190, and 208–209 (ER). Residue Cys217 is the Proton acceptor of the active site. A substrate-binding site is contributed by 218–219 (GT).

Belongs to the diaminopimelate epimerase family. In terms of assembly, homodimer.

Its subcellular location is the cytoplasm. It catalyses the reaction (2S,6S)-2,6-diaminopimelate = meso-2,6-diaminopimelate. It participates in amino-acid biosynthesis; L-lysine biosynthesis via DAP pathway; DL-2,6-diaminopimelate from LL-2,6-diaminopimelate: step 1/1. In terms of biological role, catalyzes the stereoinversion of LL-2,6-diaminopimelate (L,L-DAP) to meso-diaminopimelate (meso-DAP), a precursor of L-lysine and an essential component of the bacterial peptidoglycan. This chain is Diaminopimelate epimerase, found in Halorhodospira halophila (strain DSM 244 / SL1) (Ectothiorhodospira halophila (strain DSM 244 / SL1)).